The following is a 118-amino-acid chain: Hydrogenase maturation factor HypA (118 aa).

Residue His-2 coordinates Ni(2+). Zn(2+) is bound by residues Cys-73, Cys-76, Cys-89, and Cys-92.

It belongs to the HypA/HybF family.

Its function is as follows. Involved in the maturation of [NiFe] hydrogenases. Required for nickel insertion into the metal center of the hydrogenase. This chain is Hydrogenase maturation factor HypA, found in Shewanella oneidensis (strain ATCC 700550 / JCM 31522 / CIP 106686 / LMG 19005 / NCIMB 14063 / MR-1).